The chain runs to 78 residues: Cytochrome b-c1 complex subunit 10, mitochondrial (78 aa).

At 1 to 26 (MVSYVKGPAYKALSHFGKLNAPLVRS) the chain is on the mitochondrial matrix side. The chain crosses the membrane as a helical span at residues 27–46 (YIPNLVFWGAAAGGAVATFT). Residues 47 to 78 (EGVPLFQKTFYEKIPFFGQHWIYNPDPEDVPV) are Mitochondrial intermembrane-facing.

Belongs to the UQCR11/QCR10 family. Component of the ubiquinol-cytochrome c oxidoreductase (cytochrome b-c1 complex, complex III, CIII), a multisubunit enzyme composed of 10 subunits. The complex is composed of 3 respiratory subunits cytochrome b (COB), cytochrome c1 (CYT1) and Rieske protein (RIP1), 2 core protein subunits COR1 and QCR2, and 5 low-molecular weight protein subunits QCR6, QCR7, QCR8, QCR9 and QCR10. The complex exists as an obligatory dimer and forms supercomplexes (SCs) in the inner mitochondrial membrane with a monomer or a dimer of cytochrome c oxidase (complex IV, CIV), resulting in 2 different assemblies (supercomplexes III(2)IV and III(2)IV(2)).

It localises to the mitochondrion inner membrane. Functionally, component of the ubiquinol-cytochrome c oxidoreductase, a multisubunit transmembrane complex that is part of the mitochondrial electron transport chain which drives oxidative phosphorylation. The complex plays an important role in the uptake of multiple carbon sources present in different host niches. The chain is Cytochrome b-c1 complex subunit 10, mitochondrial from Candida albicans (strain SC5314 / ATCC MYA-2876) (Yeast).